Consider the following 631-residue polypeptide: Quinoprotein alcohol dehydrogenase PedE (631 aa).

A signal peptide spans 1 to 33 (MTIRSLPALSPLALSVRVLLMAGSLALGNVATA). Positions 53, 56, and 59 each coordinate Ca(2+). Glutamate 103 serves as a coordination point for pyrroloquinoline quinone. Cysteines 147 and 148 form a disulfide. Pyrroloquinoline quinone contacts are provided by residues arginine 153, threonine 197, and 215–217 (HGS). Glutamate 221 lines the Ca(2+) pocket. Residues 250-286 (GRLNGKDSTPTGDVKAPSWPDDPTTETGKVEAWSHGG) are disordered. Ca(2+) is bound by residues asparagine 308 and aspartate 358. The active-site Proton acceptor is aspartate 358. Arginine 386 is a binding site for pyrroloquinoline quinone. Residues 421 to 443 (GRPVENPGQRPAKPLPGETKGKP) form a disordered region. The pyrroloquinoline quinone site is built by tryptophan 531 and alanine 595.

This sequence belongs to the bacterial PQQ dehydrogenase family. As to quaternary structure, homodimer. Interacts with cytochrome c550. Requires pyrroloquinoline quinone as cofactor. It depends on Ca(2+) as a cofactor. Post-translationally, the disulfide ring formed between the two adjacent cysteine residues Cys-147 and Cys-148 is essential for efficient electron transfer at pH 7 from PedE to its natural electron acceptor cytochrome c550.

Its subcellular location is the periplasm. It carries out the reaction a primary alcohol + 2 Fe(III)-[cytochrome c] = an aldehyde + 2 Fe(II)-[cytochrome c] + 2 H(+). The enzyme catalyses ethanol + 2 Fe(III)-[cytochrome c] = acetaldehyde + 2 Fe(II)-[cytochrome c] + 2 H(+). The catalysed reaction is butan-1-ol + 2 Fe(III)-[cytochrome c] = butanal + 2 Fe(II)-[cytochrome c] + 2 H(+). It catalyses the reaction butan-2-ol + 2 Fe(III)-[cytochrome c] = butan-2-one + 2 Fe(II)-[cytochrome c] + 2 H(+). It carries out the reaction 2-phenylethanol + 2 Fe(III)-[cytochrome c] = 2-phenylacetaldehyde + 2 Fe(II)-[cytochrome c] + 2 H(+). The enzyme catalyses octan-1-ol + 2 Fe(III)-[cytochrome c] = octanal + 2 Fe(II)-[cytochrome c] + 2 H(+). The catalysed reaction is hexan-1-ol + 2 Fe(III)-[cytochrome c] = hexanal + 2 Fe(II)-[cytochrome c] + 2 H(+). It catalyses the reaction cinnamyl alcohol + 2 Fe(III)-[cytochrome c] = cinnamaldehyde + 2 Fe(II)-[cytochrome c] + 2 H(+). It carries out the reaction farnesol + 2 Fe(III)-[cytochrome c] = farnesal + 2 Fe(II)-[cytochrome c] + 2 H(+). The enzyme catalyses an aldehyde + 2 Fe(III)-[cytochrome c] + H2O = a carboxylate + 2 Fe(II)-[cytochrome c] + 3 H(+). The catalysed reaction is acetaldehyde + 2 Fe(III)-[cytochrome c] + H2O = 2 Fe(II)-[cytochrome c] + acetate + 3 H(+). It catalyses the reaction butanal + 2 Fe(III)-[cytochrome c] + H2O = butanoate + 2 Fe(II)-[cytochrome c] + 3 H(+). It carries out the reaction hexanal + 2 Fe(III)-[cytochrome c] + H2O = hexanoate + 2 Fe(II)-[cytochrome c] + 3 H(+). The enzyme catalyses octanal + 2 Fe(III)-[cytochrome c] + H2O = octanoate + 2 Fe(II)-[cytochrome c] + 3 H(+). Alcohol dehydrogenase that catalyzes the oxidation of a range of substrates, including linear and aromatic primary and secondary alcohols, as well as aldehydes, allowing bacterial growth with a variety of volatile organic compounds (VOCs) as carbon and energy sources. Uses a specific inducible cytochrome c550, encoded by the adjacent gene in the locus, as electron acceptor. The sequence is that of Quinoprotein alcohol dehydrogenase PedE from Pseudomonas putida (strain ATCC 47054 / DSM 6125 / CFBP 8728 / NCIMB 11950 / KT2440).